Here is a 61-residue protein sequence, read N- to C-terminus: Cecropin-D (61 aa).

The signal sequence occupies residues 1–22; that stretch reads MKFSKIFVFVFAIVFATASVSA. Positions 23-24 are cleaved as a propeptide — removed by a dipeptidylpeptidase; the sequence is AP. Q60 is modified (glutamine amide).

This sequence belongs to the cecropin family. In terms of tissue distribution, mainly in fat body. Lower in hemocytes. Not expressed in midguts, malpighian tubules and silk glands.

It localises to the secreted. In terms of biological role, cecropins have lytic and antibacterial activity against several Gram-positive and Gram-negative bacteria. The sequence is that of Cecropin-D (CECD) from Bombyx mori (Silk moth).